The chain runs to 145 residues: uncharacterized protein (145 aa).

Residues 46-66 (FFFLFFLFFFFFFTFQFLVAF) form a helical membrane-spanning segment.

The protein resides in the membrane. This is an uncharacterized protein from Saccharomyces cerevisiae (strain ATCC 204508 / S288c) (Baker's yeast).